The primary structure comprises 441 residues: Mannose-6-phosphate isomerase 2 (441 aa).

Residues glutamine 131, histidine 133, glutamate 158, and histidine 296 each contribute to the Zn(2+) site. Residue arginine 315 is part of the active site.

It belongs to the mannose-6-phosphate isomerase type 1 family. It depends on Zn(2+) as a cofactor. In terms of tissue distribution, not expressed in any organs under light (at protein level).

The enzyme catalyses D-mannose 6-phosphate = D-fructose 6-phosphate. Its pathway is nucleotide-sugar biosynthesis; GDP-alpha-D-mannose biosynthesis; alpha-D-mannose 1-phosphate from D-fructose 6-phosphate: step 1/2. Inhibited by EDTA, Zn(2+), Cd(2+), DTT, p-chloromercuribenzoate and L-ascorbic acid (AsA). Involved in the synthesis of the GDP-mannose and dolichol-phosphate-mannose required for a number of critical mannosyl transfer reactions. The polypeptide is Mannose-6-phosphate isomerase 2 (PMI2) (Arabidopsis thaliana (Mouse-ear cress)).